The sequence spans 473 residues: Digalactosyldiacylglycerol synthase 2, chloroplastic (473 aa).

Interaction with the membrane lipid bilayer stretches follow at residues 130–148 (LTWF…YVIG) and 227–245 (QPFT…SKGY).

This sequence belongs to the glycosyltransferase group 1 family. Glycosyltransferase 4 subfamily. In terms of tissue distribution, expressed in leaves, flowers and roots, but not in stems and siliques.

Its subcellular location is the plastid. It localises to the chloroplast outer membrane. The enzyme catalyses a 1,2-diacyl-3-O-(beta-D-galactosyl)-sn-glycerol + UDP-alpha-D-galactose = a 1,2-diacyl-3-O-[alpha-D-galactosyl-(1-&gt;6)-beta-D-galactosyl]-sn-glycerol + UDP + H(+). Stimulated by anionic phospholipids. In terms of biological role, involved in the synthesis of diacylglycerol galactolipids that are specifically found in thylakoid membranes. Specific for alpha-glycosidic linkages. During phosphate shortage, involved in the biosynthesis of digalactosyldiacylglycerol (DGDG) which rescues the limitation of phospholipids. The protein is Digalactosyldiacylglycerol synthase 2, chloroplastic of Arabidopsis thaliana (Mouse-ear cress).